Consider the following 383-residue polypeptide: Deoxyhypusine synthase-like protein (383 aa).

It belongs to the deoxyhypusine synthase family.

The polypeptide is Deoxyhypusine synthase-like protein (Nostoc sp. (strain PCC 7120 / SAG 25.82 / UTEX 2576)).